We begin with the raw amino-acid sequence, 109 residues long: T cell receptor alpha variable 26-2 (109 aa).

The signal sequence occupies residues 1–19; sequence MKLVTSITVLLSLGIMGDA. Residues 20-109 enclose the Ig-like domain; that stretch reads KTTQPNSMES…AAVYYCILRD (90 aa). Cysteines 39 and 105 form a disulfide. N-linked (GlcNAc...) asparagine glycosylation is present at N40.

In terms of assembly, alpha-beta TR is a heterodimer composed of an alpha and beta chain; disulfide-linked. The alpha-beta TR is associated with the transmembrane signaling CD3 coreceptor proteins to form the TR-CD3 (TcR or TCR). The assembly of alpha-beta TR heterodimers with CD3 occurs in the endoplasmic reticulum where a single alpha-beta TR heterodimer associates with one CD3D-CD3E heterodimer, one CD3G-CD3E heterodimer and one CD247 homodimer forming a stable octameric structure. CD3D-CD3E and CD3G-CD3E heterodimers preferentially associate with TR alpha and TR beta chains, respectively. The association of the CD247 homodimer is the last step of TcR assembly in the endoplasmic reticulum and is required for transport to the cell surface.

It is found in the cell membrane. Its function is as follows. V region of the variable domain of T cell receptor (TR) alpha chain that participates in the antigen recognition. Alpha-beta T cell receptors are antigen specific receptors which are essential to the immune response and are present on the cell surface of T lymphocytes. Recognize peptide-major histocompatibility (MH) (pMH) complexes that are displayed by antigen presenting cells (APC), a prerequisite for efficient T cell adaptive immunity against pathogens. Binding of alpha-beta TR to pMH complex initiates TR-CD3 clustering on the cell surface and intracellular activation of LCK that phosphorylates the ITAM motifs of CD3G, CD3D, CD3E and CD247 enabling the recruitment of ZAP70. In turn ZAP70 phosphorylates LAT, which recruits numerous signaling molecules to form the LAT signalosome. The LAT signalosome propagates signal branching to three major signaling pathways, the calcium, the mitogen-activated protein kinase (MAPK) kinase and the nuclear factor NF-kappa-B (NF-kB) pathways, leading to the mobilization of transcription factors that are critical for gene expression and essential for T cell growth and differentiation. The T cell repertoire is generated in the thymus, by V-(D)-J rearrangement. This repertoire is then shaped by intrathymic selection events to generate a peripheral T cell pool of self-MH restricted, non-autoaggressive T cells. Post-thymic interaction of alpha-beta TR with the pMH complexes shapes TR structural and functional avidity. The polypeptide is T cell receptor alpha variable 26-2 (Homo sapiens (Human)).